The chain runs to 571 residues: Chondroitin sulfate proteoglycan 5 (571 aa).

A signal peptide spans 1–30 (MGRAGGGGPGWGPPPVLLLLGVTLVLTAGA). Residues 31 to 428 (VPAREAGSAI…SIITDFQVMC (398 aa)) lie on the Extracellular side of the membrane. O-linked (Xyl...) (chondroitin sulfate) serine glycosylation is present at Ser38. Asn57 carries an N-linked (GlcNAc...) asparagine glycan. Positions 57-91 (NDTREEAGLPAAGEDETSWTERGSELAAVGPGVGP) are disordered. Thr76 carries O-linked (GalNAc...) threonine glycosylation. O-linked (Xyl...) (chondroitin sulfate) serine glycosylation is present at Ser123. Residue Thr132 is glycosylated (O-linked (GalNAc...) threonine). 3 disordered regions span residues 137 to 169 (DEALGSSTMPPAIPEATEASGPPSPTLRDKPSL), 186 to 254 (GGST…TPSW), and 279 to 357 (DDLE…DLAT). Ser143 carries O-linked (GalNAc...) serine glycosylation. Residues Thr144 and Thr153 are each glycosylated (O-linked (GalNAc...) threonine). O-linked (GalNAc...) serine glycans are attached at residues Ser156 and Ser160. 2 O-linked (GalNAc...) threonine glycosylation sites follow: Thr162 and Thr198. Acidic residues predominate over residues 214-223 (IDIDYFEGLD). A glycan (O-linked (GalNAc...) threonine) is linked at Thr240. The interaction with TNC and TNR stretch occupies residues 270-306 (DFYPTTSFYDDLEEEEEEEEDKDAVGGGDLEDESDLL). Positions 279-291 (DDLEEEEEEEEDK) are enriched in acidic residues. O-linked (GalNAc...) threonine glycans are attached at residues Thr318 and Thr322. A glycan (N-linked (GlcNAc...) asparagine) is linked at Asn372. Residues 376 to 418 (RSVCDLFPSYCHNGGQCYLVENIGAFCRCNTQDYIWHKGMRCE) form the EGF-like domain. Intrachain disulfides connect Cys379/Cys392, Cys386/Cys402, and Cys404/Cys417. A helical transmembrane segment spans residues 429–449 (VAVGSAALVLLLLFMMTVFFA). Positions 447–465 (FFAKKLYLLKTENTKLRRT) are interaction with GOPC. Topologically, residues 450–571 (KKLYLLKTEN…EVNCLQNNLT (122 aa)) are cytoplasmic. Ser472, Ser480, Ser488, and Ser548 each carry phosphoserine. The tract at residues 538-563 (EESFNIQNSMSPKLEGGKGDQDDLEV) is disordered.

Interacts with ERBB3 and GOPC. Binds TNR and probably TNC. Interacts with MDK; this interaction is independent of the presence of chondroitin sulfate chains and promotes elongation of oligodendroglial precursor-like cells. N-glycosylated. In terms of processing, O-glycosylated; contains chondroitin sulfate glycans. Part-time proteoglycan, expressed in part as a proteoglycan exhibiting chondroitin sulfate glycans and in part as a non-proteoglycan form. The relative amount of both forms depends on tissues and tissue maturation. Post-translationally, phosphorylated; in intracellular and extracellular parts. Expressed in cerebral cortex and cerebellum. Expressed in retina (at protein level).

It localises to the cell membrane. It is found in the synaptic cell membrane. The protein localises to the endoplasmic reticulum membrane. The protein resides in the golgi apparatus membrane. Its subcellular location is the cell surface. It localises to the secreted. May function as a growth and differentiation factor involved in neuritogenesis. May induce ERBB3 activation. This is Chondroitin sulfate proteoglycan 5 (Cspg5) from Rattus norvegicus (Rat).